Here is a 344-residue protein sequence, read N- to C-terminus: Small ribosomal subunit protein uS3 (344 aa).

One can recognise a KH type-2 domain in the interval 38-106 (LKAALRERLK…EVFIDIQEVH (69 aa)). The disordered stretch occupies residues 217–344 (PEPEPRREQR…QKPEGSGENQ (128 aa)). Composition is skewed to basic and acidic residues over residues 219-259 (PEPR…RGDR) and 335-344 (QKPEGSGENQ).

It belongs to the universal ribosomal protein uS3 family. In terms of assembly, part of the 30S ribosomal subunit. Forms a tight complex with proteins S10 and S14.

Binds the lower part of the 30S subunit head. Binds mRNA in the 70S ribosome, positioning it for translation. The protein is Small ribosomal subunit protein uS3 of Solibacter usitatus (strain Ellin6076).